Here is a 381-residue protein sequence, read N- to C-terminus: Cobalt-precorrin-5B C(1)-methyltransferase (381 aa).

The protein belongs to the CbiD family.

The catalysed reaction is Co-precorrin-5B + S-adenosyl-L-methionine = Co-precorrin-6A + S-adenosyl-L-homocysteine. It functions in the pathway cofactor biosynthesis; adenosylcobalamin biosynthesis; cob(II)yrinate a,c-diamide from sirohydrochlorin (anaerobic route): step 6/10. In terms of biological role, catalyzes the methylation of C-1 in cobalt-precorrin-5B to form cobalt-precorrin-6A. This is Cobalt-precorrin-5B C(1)-methyltransferase from Methylococcus capsulatus (strain ATCC 33009 / NCIMB 11132 / Bath).